Reading from the N-terminus, the 216-residue chain is Glutathione S-transferase 1, isoform B (216 aa).

In terms of domain architecture, GST N-terminal spans 1–80 (MDFYYLPGSA…YLVEKYGKPC (80 aa)). Residues Ser-9, 50–52 (HCV), and 64–66 (ESR) contribute to the glutathione site. Residues 89 to 210 (DPQKRAIVNQ…RSWAEAARPF (122 aa)) form the GST C-terminal domain.

The protein belongs to the GST superfamily. Theta family. In terms of assembly, homodimer.

The catalysed reaction is RX + glutathione = an S-substituted glutathione + a halide anion + H(+). Functionally, conjugation of reduced glutathione to a wide number of exogenous and endogenous hydrophobic electrophiles. This is Glutathione S-transferase 1, isoform B from Anopheles gambiae (African malaria mosquito).